Here is a 192-residue protein sequence, read N- to C-terminus: Probable apo-citrate lyase phosphoribosyl-dephospho-CoA transferase (192 aa).

Belongs to the CitX family.

The catalysed reaction is apo-[citrate lyase ACP] + 2'-(5''-triphospho-alpha-D-ribosyl)-3'-dephospho-CoA = holo-[citrate lyase ACP] + diphosphate. Transfers 2-(5''-triphosphoribosyl)-3'-dephosphocoenzyme-A on a serine residue to the apo-acyl carrier protein (gamma chain) of the citrate lyase to yield holo-acyl carrier protein. This chain is Probable apo-citrate lyase phosphoribosyl-dephospho-CoA transferase, found in Streptococcus pyogenes serotype M18 (strain MGAS8232).